A 199-amino-acid polypeptide reads, in one-letter code: Puromycin N-acetyltransferase (199 aa).

One can recognise an N-acetyltransferase domain in the interval 6-198 (PTVRLATRDD…RTWCMTRKPG (193 aa)).

In terms of biological role, detoxification of puromycin. The sequence is that of Puromycin N-acetyltransferase (pac) from Streptomyces alboniger.